Here is a 333-residue protein sequence, read N- to C-terminus: Transcription factor MYB94 (333 aa).

HTH myb-type domains are found at residues Lys9–Ile65 and Lys66–Leu116. DNA-binding regions (H-T-H motif) lie at residues Trp37 to Leu61 and Trp89 to Leu112. Residues Lys134–Gly154 are compositionally biased toward polar residues. 2 disordered regions span residues Lys134–Glu157 and Pro183–Gly218. Positions Ser196–Thr209 are enriched in low complexity.

Expressed in germinating seeds, rosette and cauline leaves, flower buds, open flowers, stems and developing siliques.

The protein localises to the nucleus. Its function is as follows. Transcription activator involved in the activation of cuticular wax biosynthesis under drought stress. Binds directly to the promoters of genes involved in cuticular wax biosynthesis. Transactivates WSD1, KCS2/DAISY, CER1, CER2, FAR3 and ECR genes. Functions together with MYB96 in the activation of cuticular wax biosynthesis. The polypeptide is Transcription factor MYB94 (Arabidopsis thaliana (Mouse-ear cress)).